A 577-amino-acid polypeptide reads, in one-letter code: Leucine-rich repeat protein soc-2 homolog (577 aa).

Composition is skewed to basic and acidic residues over residues 1 to 10 (MRRTKGRTDS) and 33 to 48 (STAHKSDKKHDPEAKK). Residues 1–71 (MRRTKGRTDS…PTVKKRSTPS (71 aa)) are disordered. LRR repeat units lie at residues 87–109 (GATRLDLSKAAVTVLPKELKELT), 110–131 (SLRELYLYGNRIAVLPPEVGLL), 133–155 (NLETLALSENNLTTLPDNLVKLT), 156–177 (KLKVLDLRHNKIKEIPDVIYKL), 179–201 (TLTTLYLRFNRISVVESGIGNLK), 202–223 (LLERLSLRENKIKILPRVIGQL), 225–246 (HLVTLDISHNHIENLPAEIGNC), 248–269 (HMTSLDLQHNDIPSLPDSIGRL), 271–292 (AMTRLGLRYNQLSSLPDSLANC), 294–315 (GIDEFNIEGNNIAELPEKLLSS), 318–339 (NLTSLTLSRNKFEVFPAGPPKQ), 342–363 (QVNTFIMEHNRMQKIPFGVFNK), 366–387 (YLSKLNVKDNQLTSLPLDFGSW), 389–410 (SLVELNVATNQISKLPEDIQWL), 412–434 (NLEVLILSNNLLKKLPRGIGALR), 435–456 (KLRVLDIEENKLESIPTEIEYL), 458–479 (SLERLVLQSNCLGSLPRSIGYL), 481–502 (SVTYLSVGENELVSVPQEIGNM), 504–526 (SLEQLYLNDNENLQSLPYELVLC), and 528–549 (SLQIMSIENCPLSALPSQIVAG).

It belongs to the SHOC2 family.

In terms of biological role, acts as a Ras effector and participates in MAPK pathway activation. Probably acts as a scaffolding protein in a protein phosphatase complex that specifically dephosphorylates Raf kinase and stimulate Raf activity at specialized signaling complexes upon Ras activation. This chain is Leucine-rich repeat protein soc-2 homolog, found in Nematostella vectensis (Starlet sea anemone).